Reading from the N-terminus, the 342-residue chain is Ferredoxin--NADP reductase (342 aa).

FAD-binding residues include Cys17, Asp36, Gln44, Tyr49, Val89, Phe124, Asp289, and Thr330.

The protein belongs to the ferredoxin--NADP reductase type 2 family. In terms of assembly, homodimer. The cofactor is FAD.

The enzyme catalyses 2 reduced [2Fe-2S]-[ferredoxin] + NADP(+) + H(+) = 2 oxidized [2Fe-2S]-[ferredoxin] + NADPH. The protein is Ferredoxin--NADP reductase of Nitrobacter hamburgensis (strain DSM 10229 / NCIMB 13809 / X14).